The following is a 116-amino-acid chain: Large ribosomal subunit protein eL22A (116 aa).

The protein belongs to the eukaryotic ribosomal protein eL22 family.

The sequence is that of Large ribosomal subunit protein eL22A (rpl22) from Dictyostelium discoideum (Social amoeba).